The chain runs to 625 residues: tRNA uridine 5-carboxymethylaminomethyl modification enzyme MnmG (625 aa).

Residues 11–16 (GAGHAG), Val-123, and Ser-178 contribute to the FAD site. NAD(+) is bound at residue 271–285 (GPRYCPSIETKIVTF). Gln-368 lines the FAD pocket.

This sequence belongs to the MnmG family. As to quaternary structure, homodimer. Heterotetramer of two MnmE and two MnmG subunits. Requires FAD as cofactor.

Its subcellular location is the cytoplasm. In terms of biological role, NAD-binding protein involved in the addition of a carboxymethylaminomethyl (cmnm) group at the wobble position (U34) of certain tRNAs, forming tRNA-cmnm(5)s(2)U34. This is tRNA uridine 5-carboxymethylaminomethyl modification enzyme MnmG from Bacteroides fragilis (strain YCH46).